The following is a 159-amino-acid chain: Large ribosomal subunit protein uL22 (159 aa).

The disordered stretch occupies residues 129-159; it reads VEGQQKAKMARQKAVTSVVKAPSKTQGGVQK.

Belongs to the universal ribosomal protein uL22 family. In terms of assembly, part of the 50S ribosomal subunit.

This protein binds specifically to 23S rRNA; its binding is stimulated by other ribosomal proteins, e.g. L4, L17, and L20. It is important during the early stages of 50S assembly. It makes multiple contacts with different domains of the 23S rRNA in the assembled 50S subunit and ribosome. Functionally, the globular domain of the protein is located near the polypeptide exit tunnel on the outside of the subunit, while an extended beta-hairpin is found that lines the wall of the exit tunnel in the center of the 70S ribosome. The chain is Large ribosomal subunit protein uL22 (rplV) from Mycoplasma pneumoniae (strain ATCC 29342 / M129 / Subtype 1) (Mycoplasmoides pneumoniae).